The chain runs to 113 residues: Urocortin-2 (113 aa).

Residues 1 to 23 form the signal peptide; the sequence is MMTRWALVVFVVLMLDRILFVPG. Residues 24–71 constitute a propeptide that is removed on maturation; that stretch reads TPIPTFQLLPQNSLETTPSSVTSESSSGTTTGPSASWSNSKASPYLDT. The span at 37 to 61 shows a compositional bias: low complexity; that stretch reads LETTPSSVTSESSSGTTTGPSASWS. Residues 37 to 64 are disordered; it reads LETTPSSVTSESSSGTTTGPSASWSNSK. Position 110 is a valine amide; partial (Val-110).

This sequence belongs to the sauvagine/corticotropin-releasing factor/urotensin I family. Binds with high affinity to CRF receptors 2-alpha and 2-beta. Post-translationally, glycosylated.

The protein resides in the secreted. In terms of biological role, suppresses food intake, delays gastric emptying and decreases heat-induced edema. Might represent an endogenous ligand for maintaining homeostasis after stress. The sequence is that of Urocortin-2 (Ucn2) from Mus musculus (Mouse).